A 356-amino-acid polypeptide reads, in one-letter code: Probable neutral protease 2 homolog TRV_06370 (356 aa).

Residues 1 to 17 (MQFTALLAALGAPLALA) form the signal peptide. The propeptide occupies 18 to 183 (ASIPAAAHNH…DDSTGVIDKR (166 aa)). Cystine bridges form between Cys-191–Cys-262 and Cys-269–Cys-287. His-311 serves as a coordination point for Zn(2+). Residue Glu-312 is part of the active site. Zn(2+) contacts are provided by His-315 and Asp-326.

It belongs to the peptidase M35 family. The cofactor is Zn(2+).

The protein resides in the secreted. The enzyme catalyses Preferential cleavage of bonds with hydrophobic residues in P1'. Also 3-Asn-|-Gln-4 and 8-Gly-|-Ser-9 bonds in insulin B chain.. Its function is as follows. Probable secreted metalloprotease that shows high activities on basic nuclear substrates such as histone and protamine. May be involved in virulence. This is Probable neutral protease 2 homolog TRV_06370 from Trichophyton verrucosum (strain HKI 0517).